The primary structure comprises 180 residues: Endoribonuclease YbeY (180 aa).

Residues His136, His140, and His146 each coordinate Zn(2+).

The protein belongs to the endoribonuclease YbeY family. Zn(2+) serves as cofactor.

The protein resides in the cytoplasm. In terms of biological role, single strand-specific metallo-endoribonuclease involved in late-stage 70S ribosome quality control and in maturation of the 3' terminus of the 16S rRNA. This is Endoribonuclease YbeY from Synechococcus sp. (strain CC9902).